The chain runs to 275 residues: Large ribosomal subunit protein uL2 (275 aa).

Positions 216–275 (GIRPQTRGSAMNPIDHPHGGGEGKTNSGRHPVTPWGMPTKGYKTRKKKASDKLIISKRKK) are disordered. Residues 257–275 (YKTRKKKASDKLIISKRKK) show a composition bias toward basic residues.

This sequence belongs to the universal ribosomal protein uL2 family. As to quaternary structure, part of the 50S ribosomal subunit. Forms a bridge to the 30S subunit in the 70S ribosome.

One of the primary rRNA binding proteins. Required for association of the 30S and 50S subunits to form the 70S ribosome, for tRNA binding and peptide bond formation. It has been suggested to have peptidyltransferase activity; this is somewhat controversial. Makes several contacts with the 16S rRNA in the 70S ribosome. In Aliarcobacter butzleri (strain RM4018) (Arcobacter butzleri), this protein is Large ribosomal subunit protein uL2.